The primary structure comprises 95 residues: MLKSNNASETATRKVGDKTAKKVFFRRRKGCPLSVPNAPVIDYKNPELLIKFVSEGGRMLPSRITNVCAKKQRKLNNAIKIARILALLPFVFQAK.

Belongs to the bacterial ribosomal protein bS18 family. Part of the 30S ribosomal subunit. Forms a tight heterodimer with protein bS6.

Its function is as follows. Binds as a heterodimer with protein bS6 to the central domain of the 16S rRNA, where it helps stabilize the platform of the 30S subunit. The sequence is that of Small ribosomal subunit protein bS18 from Rickettsia felis (strain ATCC VR-1525 / URRWXCal2) (Rickettsia azadi).